The primary structure comprises 498 residues: MNSMKYRDLREFLSLLEERGELKRITQPIDPYLEMTEIADRTLRAEGPALLFENPKGYDMPVLCNLFGTPKRVALGMGQEEVSALRDVGKLLAFLKEPEPPKGFRDLVDKMPKFRQVLNMPTKRLFSAPCQEQIWQGDDVDLRRIPVMQCWPEDAAPLITWGLTVTRGPHKERQNLGIYRQQVLGKNKLIMRWLSHRGGALDFQEWCQENPGQRFPVAVALGADPATILGAVTPVPDTLSEYAFAGLLRGHKTEVVKCLSSDLEVPASAEIVLEGYIEPGEMAAEGPYGDHTGYYNEVDHFPVFTVTHITQRQNAIYHSTYTGRPPDEPAVLGVALNEVFVPILQKQFPEIVDFYLPPEGCSYRLAVVTMKKQYAGHAKRVMMGVWSFLRQFMYTKFVIVCDDDINARDWKDVIWAITTRMDPARDTVLVENTPIDYLDFASPVSGLGSKMGLDATNKWPGETQREWGHPIKKDPQVCARIDEIWDELAIFSDREPRR.

A Mn(2+)-binding site is contributed by N175. Residues 178–180 (IYR), 192–194 (RWL), and 197–198 (RG) contribute to the prenylated FMN site. Position 241 (E241) interacts with Mn(2+). D290 acts as the Proton donor in catalysis.

It belongs to the UbiD family. In terms of assembly, homohexamer. Requires prenylated FMN as cofactor. Mn(2+) serves as cofactor.

The protein resides in the cell membrane. The catalysed reaction is a 4-hydroxy-3-(all-trans-polyprenyl)benzoate + H(+) = a 2-(all-trans-polyprenyl)phenol + CO2. It participates in cofactor biosynthesis; ubiquinone biosynthesis. Its function is as follows. Catalyzes the decarboxylation of 3-octaprenyl-4-hydroxy benzoate to 2-octaprenylphenol, an intermediate step in ubiquinone biosynthesis. This chain is 3-octaprenyl-4-hydroxybenzoate carboxy-lyase, found in Pectobacterium atrosepticum (strain SCRI 1043 / ATCC BAA-672) (Erwinia carotovora subsp. atroseptica).